The primary structure comprises 25 residues: Superoxide dismutase [Mn], mitochondrial (25 aa).

His9 serves as a coordination point for Mn(2+).

It belongs to the iron/manganese superoxide dismutase family. In terms of assembly, homotetramer. Mn(2+) serves as cofactor.

The protein resides in the mitochondrion matrix. The enzyme catalyses 2 superoxide + 2 H(+) = H2O2 + O2. In terms of biological role, destroys superoxide anion radicals which are normally produced within the cells and which are toxic to biological systems. In Alternaria alternata (Alternaria rot fungus), this protein is Superoxide dismutase [Mn], mitochondrial.